Here is a 253-residue protein sequence, read N- to C-terminus: MKHIVIPARFSSSRLPGKPLLLIHDRPMILRVVDQAKKVEGFDDLCVATDDERIAEICRAEGVDVVLTSADHPSGTDRLSEVARIKGWDADDIIVNVQGDEPLLPAQLVQQVAKLLVDKPNCSMSTLCEPIHALDEFQRDSIVKVVMSKQNEALYFSRATIPYDRDGAKRDEPTLHTQAFRHLGLYAYRVSLLQEYVTWEMGKLEKLESLEQLRVLENGHRIAIAVAEANLPPGVDTQADLDRLNNMPVESFE.

The protein belongs to the KdsB family.

It is found in the cytoplasm. It carries out the reaction 3-deoxy-alpha-D-manno-oct-2-ulosonate + CTP = CMP-3-deoxy-beta-D-manno-octulosonate + diphosphate. It functions in the pathway nucleotide-sugar biosynthesis; CMP-3-deoxy-D-manno-octulosonate biosynthesis; CMP-3-deoxy-D-manno-octulosonate from 3-deoxy-D-manno-octulosonate and CTP: step 1/1. The protein operates within bacterial outer membrane biogenesis; lipopolysaccharide biosynthesis. Functionally, activates KDO (a required 8-carbon sugar) for incorporation into bacterial lipopolysaccharide in Gram-negative bacteria. The polypeptide is 3-deoxy-manno-octulosonate cytidylyltransferase (Acinetobacter baumannii (strain ATCC 17978 / DSM 105126 / CIP 53.77 / LMG 1025 / NCDC KC755 / 5377)).